The primary structure comprises 181 residues: Inner membrane-spanning protein YciB (181 aa).

5 consecutive transmembrane segments (helical) span residues 22-42 (IYTA…VTYA), 50-70 (MQLI…FLHD), 80-100 (IVYC…KPVI), 122-142 (WVLF…EMPL), and 148-168 (FKVF…GMYV).

This sequence belongs to the YciB family.

It is found in the cell inner membrane. Its function is as follows. Plays a role in cell envelope biogenesis, maintenance of cell envelope integrity and membrane homeostasis. This Aliivibrio fischeri (strain MJ11) (Vibrio fischeri) protein is Inner membrane-spanning protein YciB.